A 102-amino-acid polypeptide reads, in one-letter code: Small ribosomal subunit protein uS10 (102 aa).

This sequence belongs to the universal ribosomal protein uS10 family. As to quaternary structure, part of the 30S ribosomal subunit.

Its function is as follows. Involved in the binding of tRNA to the ribosomes. The sequence is that of Small ribosomal subunit protein uS10 from Beijerinckia indica subsp. indica (strain ATCC 9039 / DSM 1715 / NCIMB 8712).